Reading from the N-terminus, the 801-residue chain is DNA mismatch repair protein MutS (801 aa).

An ATP-binding site is contributed by 590 to 597 (GPNMSGKS).

The protein belongs to the DNA mismatch repair MutS family.

Functionally, this protein is involved in the repair of mismatches in DNA. It is possible that it carries out the mismatch recognition step. This protein has a weak ATPase activity. The protein is DNA mismatch repair protein MutS of Thermotoga neapolitana (strain ATCC 49049 / DSM 4359 / NBRC 107923 / NS-E).